Consider the following 455-residue polypeptide: Alcohol acyl transferase 1 allele GSb (455 aa).

Residues His-164 and Asn-385 each act as proton acceptor in the active site.

The protein belongs to the plant acyltransferase family. As to expression, expressed at very low levels in the skin of ripe fruit.

In terms of biological role, involved in the biosynthesis of volatile esters which confer ripe apple fruit flavor. Alcohol acyl transferase that can use a wide range of alcohols as substrate to produce esters. In Malus domestica (Apple), this protein is Alcohol acyl transferase 1 allele GSb.